A 115-amino-acid polypeptide reads, in one-letter code: Large ribosomal subunit protein uL23 (115 aa).

This sequence belongs to the universal ribosomal protein uL23 family. In terms of assembly, part of the 50S ribosomal subunit. Contacts protein L29, and trigger factor when it is bound to the ribosome.

In terms of biological role, one of the early assembly proteins it binds 23S rRNA. One of the proteins that surrounds the polypeptide exit tunnel on the outside of the ribosome. Forms the main docking site for trigger factor binding to the ribosome. This is Large ribosomal subunit protein uL23 from Granulibacter bethesdensis (strain ATCC BAA-1260 / CGDNIH1).